An 824-amino-acid polypeptide reads, in one-letter code: Vesicle-fusing ATPase (824 aa).

Residues 582–587 (RGMIVW) and 622–629 (AKTGKTSL) each bind ATP. Thr-627 serves as a coordination point for Mg(2+).

It belongs to the AAA ATPase family. In terms of assembly, homohexamer. It depends on Mg(2+) as a cofactor.

The protein localises to the cytoplasm. It catalyses the reaction ATP + H2O = ADP + phosphate + H(+). Required for vesicle-mediated transport. Catalyzes the fusion of transport vesicles within the Golgi cisternae. Is also required for transport from the endoplasmic reticulum to the Golgi stack. Seems to function as a fusion protein required for the delivery of cargo proteins to all compartments of the Golgi stack independent of vesicle origin. The protein is Vesicle-fusing ATPase (nsf-1) of Caenorhabditis elegans.